We begin with the raw amino-acid sequence, 139 residues long: Large ribosomal subunit protein uL16 (139 aa).

It belongs to the universal ribosomal protein uL16 family. As to quaternary structure, part of the 50S ribosomal subunit.

Its function is as follows. Binds 23S rRNA and is also seen to make contacts with the A and possibly P site tRNAs. In Chlorobium luteolum (strain DSM 273 / BCRC 81028 / 2530) (Pelodictyon luteolum), this protein is Large ribosomal subunit protein uL16.